The primary structure comprises 486 residues: MTFTIQHFIALLPLLITSATLVVVMLAVAWKRNHSFTATLSVIGLNLALLSLLPVLGVTPIEVTPLVLVDNYACFYMALVLVSALACVTLAHAYMESYPGNREELYLLLLLATAGGLVLVSAQHLASLFIGLELLSVPVYGMVAYAFFNKRSLEAGIKYTVLSAAGSAFLLFGMALLYAESGTLGFAGLGAKVAEHVLSGPLVSVGVGMMLVGLGFKLSLVPFHLWTPDVYEGAPAPVSAFLATASKVAVFAVLLRLFQIAPAALDNQLLNISLSVIAVASILFGNLLALTQSNIKRLLGYSSIAHLGYLLVALIASKGMAVEAVGVYLATYVLTSLGAFGVITLMSTPYSGRDADALFEYRGLFWRRPVLTAVMTVMMLSLAGIPLTAGFIGKFYVIAVGVESHLWWLIGALVLGSAIGLYYYLRVMVTLFLVEPGIRQHDAPFNWGQRAGGIMLVAIALLAFFLGVYPQPLLEILQHSGLALAG.

Helical transmembrane passes span 8 to 28 (FIAL…MLAV), 38 to 58 (ATLS…VLGV), 73 to 93 (ACFY…LAHA), 105 to 125 (LYLL…AQHL), 128 to 148 (LFIG…YAFF), 169 to 189 (FLLF…FAGL), 196 to 216 (HVLS…GLGF), 235 to 255 (PAPV…AVLL), 269 to 289 (LLNI…NLLA), 304 to 324 (IAHL…AVEA), 325 to 345 (VGVY…VITL), 373 to 393 (AVMT…GFIG), 405 to 427 (HLWW…YLRV), and 454 to 474 (IMLV…QPLL).

The protein belongs to the complex I subunit 2 family. In terms of assembly, NDH-1 is composed of 13 different subunits. Subunits NuoA, H, J, K, L, M, N constitute the membrane sector of the complex.

The protein resides in the cell inner membrane. The enzyme catalyses a quinone + NADH + 5 H(+)(in) = a quinol + NAD(+) + 4 H(+)(out). NDH-1 shuttles electrons from NADH, via FMN and iron-sulfur (Fe-S) centers, to quinones in the respiratory chain. The immediate electron acceptor for the enzyme in this species is believed to be ubiquinone. Couples the redox reaction to proton translocation (for every two electrons transferred, four hydrogen ions are translocated across the cytoplasmic membrane), and thus conserves the redox energy in a proton gradient. This chain is NADH-quinone oxidoreductase subunit N, found in Pseudomonas aeruginosa (strain ATCC 15692 / DSM 22644 / CIP 104116 / JCM 14847 / LMG 12228 / 1C / PRS 101 / PAO1).